Reading from the N-terminus, the 173-residue chain is NADH-ubiquinone oxidoreductase chain 6 (173 aa).

The next 5 membrane-spanning stretches (helical) occupy residues 1–21, 27–47, 48–68, 87–107, and 139–159; these read MTYF…AVAS, YGVL…LSLG, VSFI…VVFV, VVIY…VGDF, and WGAG…FVVL.

The protein belongs to the complex I subunit 6 family.

It is found in the mitochondrion membrane. It carries out the reaction a ubiquinone + NADH + 5 H(+)(in) = a ubiquinol + NAD(+) + 4 H(+)(out). In terms of biological role, core subunit of the mitochondrial membrane respiratory chain NADH dehydrogenase (Complex I) that is believed to belong to the minimal assembly required for catalysis. Complex I functions in the transfer of electrons from NADH to the respiratory chain. The immediate electron acceptor for the enzyme is believed to be ubiquinone. The chain is NADH-ubiquinone oxidoreductase chain 6 (MT-ND6) from Struthio camelus (Common ostrich).